Here is a 657-residue protein sequence, read N- to C-terminus: Single-minded homolog 2 (657 aa).

Residues 1 to 53 (MKEKSKNAAKTRREKENGEFYELAKLLPLPSAITSQLDKASIIRLTTSYLKMR) enclose the bHLH domain. 2 consecutive PAS domains span residues 77 to 147 (AKEL…PPLH) and 218 to 288 (PPSA…LVKG). Residues 218–288 (PPSAITEIKL…YAHHLLLVKG (71 aa)) enclose the PAC domain. Residues 336 to 657 (EYKELQLSLD…GASVIITNGR (322 aa)) enclose the Single-minded C-terminal domain. The segment covering 354–364 (ESWRTTLSTSQ) has biased composition (polar residues). 2 disordered regions span residues 354-387 (ESWR…NPYP) and 612-641 (LGSA…APGA). The Nuclear localization signal motif lies at 367 to 386 (RKSAKPKNTKMKTKLRTNPY). Residues 369–381 (SAKPKNTKMKTKL) show a composition bias toward basic residues.

As to quaternary structure, efficient DNA binding requires dimerization with another bHLH protein. Heterodimer of SIM2 and ARNT. As to expression, transcripts were detected in high levels in kidney followed by skeletal muscle and lung. Low levels were found in testis, brain and heart. In early fetal development it is found in CNS, developing kidney, tongue epithelium and cartilage primordia.

It is found in the nucleus. Transcription factor that may be a master gene of CNS development in cooperation with Arnt. It may have pleiotropic effects in the tissues expressed during development. This Mus musculus (Mouse) protein is Single-minded homolog 2 (Sim2).